Consider the following 356-residue polypeptide: Carbohydrate sulfotransferase 10 (356 aa).

At Met1–Leu6 the chain is on the cytoplasmic side. The chain crosses the membrane as a helical; Signal-anchor for type II membrane protein span at residues Leu7–Leu27. Residues Thr28–Asn356 are Lumenal-facing. A glycan (N-linked (GlcNAc...) asparagine) is linked at Asn99. 3'-phosphoadenylyl sulfate-binding positions include Pro127–Gln133 and Arg189–Ser197. Residues Asn228 and Asn316 are each glycosylated (N-linked (GlcNAc...) asparagine).

It belongs to the sulfotransferase 2 family.

Its subcellular location is the golgi apparatus membrane. The enzyme catalyses 3-O-{beta-D-GlcA-(1-&gt;[3)-alpha-D-Xyl-(1-&gt;3)-beta-D-GlcA-(1-&gt;](n)-4)-beta-D-Xyl-(1-&gt;4)-Rib-ol-P-Rib-ol-P-3-beta-D-GalNAc-(1-&gt;3)-beta-D-GlcNAc-(1-&gt;4)-O-6-P-alpha-D-Man}-L-Thr-[protein] + 3'-phosphoadenylyl sulfate = 3-O-{O-3-S-beta-D-GlcA-(1-&gt;[3)-alpha-D-Xyl-(1-&gt;3)-beta-D-GlcA-(1-&gt;](n)-4)-beta-D-Xyl-(1-&gt;4)-Rib-ol-P-Rib-ol-P-3-beta-D-GalNAc-(1-&gt;3)-beta-D-GlcNAc-(1-&gt;4)-O-6-P-alpha-D-Man}-L-Thr-[protein] + adenosine 3',5'-bisphosphate + H(+). It catalyses the reaction 17beta-estradiol 3-O-(beta-D-glucuronate) + 3'-phosphoadenylyl sulfate = 17beta-estradiol 3-O-(3-sulfo-beta-D-glucuronate) + adenosine 3',5'-bisphosphate + H(+). It carries out the reaction 17beta-estradiol 3-O-(beta-D-glucuronate) 17-sulfate + 3'-phosphoadenylyl sulfate = 17beta-estradiol 3-O-(3-sulfo-beta-D-glucuronate) 17-sulfate + adenosine 3',5'-bisphosphate + H(+). The catalysed reaction is 17beta-estradiol 17-O-(beta-D-glucuronate) + 3'-phosphoadenylyl sulfate = 17beta-estradiol 17-O-(3-sulfo-beta-D-glucuronate) + adenosine 3',5'-bisphosphate + H(+). The enzyme catalyses 16alpha,17beta-estriol 3-O-(beta-D-glucuronate) + 3'-phosphoadenylyl sulfate = 16alpha,17beta-estriol 3-O-(3-sulfo-beta-D-glucuronate) + adenosine 3',5'-bisphosphate + H(+). It catalyses the reaction 16alpha,17beta-estriol 16-O-(beta-D-glucuronate) + 3'-phosphoadenylyl sulfate = 16alpha,17beta-estriol 16-O-(3-sulfo-beta-D-glucuronate) + adenosine 3',5'-bisphosphate + H(+). It carries out the reaction 16alpha,17beta-estriol 17-O-(beta-D-glucuronate) + 3'-phosphoadenylyl sulfate = 16alpha,17beta-estriol 17-O-(3-sulfo-beta-D-glucuronate) + adenosine 3',5'-bisphosphate + H(+). The catalysed reaction is estrone 3-O-(beta-D-glucuronate) + 3'-phosphoadenylyl sulfate = estrone 3-O-(3-sulfo-beta-D-glucuronate) + adenosine 3',5'-bisphosphate + H(+). The enzyme catalyses 3alpha,20alpha-dihydroxy-5beta-pregnane 3-O-(beta-D-glucuronate) + 3'-phosphoadenylyl sulfate = 3alpha,20alpha-dihydroxy-5beta-pregnane 3-O-(3-sulfo-beta-D-glucuronate) + adenosine 3',5'-bisphosphate + H(+). It catalyses the reaction testosterone 17-O-(beta-D-glucuronate) + 3'-phosphoadenylyl sulfate = testosterone 17-O-(3-sulfo-beta-D-glucuronate) + adenosine 3',5'-bisphosphate + H(+). It carries out the reaction 3beta-androst-5-en-17-one 3-O-(beta-D-glucuronate) + 3'-phosphoadenylyl sulfate = 3beta-androst-5-en-17-one 3-O-(3-sulfo-beta-D-glucuronate) + adenosine 3',5'-bisphosphate + H(+). The catalysed reaction is 3alpha,17alpha-dihydroxy-5beta-androstane-11-one-17beta-carboxylate 3-O-(beta-D-glucuronate) + 3'-phosphoadenylyl sulfate = 3alpha,17alpha-dihydroxy-5beta-androstane-11-one-17beta-carboxylate 3-O-(3-sulfo-beta-D-glucuronate) + adenosine 3',5'-bisphosphate + H(+). The enzyme catalyses 3alpha-hydroxyetiocholan-17-one 3-O-(beta-D-glucuronate) + 3'-phosphoadenylyl sulfate = 3alpha-hydroxyetiocholan-17-one 3-O-(3-sulfo-beta-D-glucuronate) + adenosine 3',5'-bisphosphate + H(+). It functions in the pathway steroid metabolism. It participates in protein modification; carbohydrate sulfation. Functionally, catalyzes the transfer of sulfate from 3'-phosphoadenylyl sulfate (PAPS) to position 3 of terminal glucuronic acid of both protein- and lipid-linked oligosaccharides. Participates in biosynthesis of HNK-1 carbohydrate structure 3-O-sulfo-beta-D-GlcA-(1-&gt;3)-beta-D-Gal-(1-&gt;4)-D-GlcNAc-R, a sulfated glucuronyl-lactosaminyl residue carried by many neural recognition molecules, which is involved in cell interactions during ontogenetic development and in synaptic plasticity in the adult. May be indirectly involved in synapse plasticity of the hippocampus, via its role in HNK-1 biosynthesis. Sulfates terminal glucuronyl residue of the laminin globular (LG)-domain binding epitope on DAG1/alpha-dystroglycan and prevents further polymerization by LARGE1 glycosyltransferase. Likely defines the chain length of LG epitope, conferring binding specificity to extracellular matrix components. Plays a role in down-regulating the steroid hormones. Sulfates glucuronidated estrogens and androgens with an impact in hormone cycle and fertility. Has a preference for glucuronyl moiety at the 3-hydroxyl group of a sterol ring rather than the 17-hydroxyl group, showing high catalytic efficiency for 17beta-estradiol 3-O-(beta-D-glucuronate) and dehydroepiandrosterone 3-O-(beta-D-glucuronate) hormones. The polypeptide is Carbohydrate sulfotransferase 10 (CHST10) (Pongo abelii (Sumatran orangutan)).